We begin with the raw amino-acid sequence, 550 residues long: CTP synthase (550 aa).

The segment at 1 to 270 (MTKYVFVTGG…DRIICEELKL (270 aa)) is amidoligase domain. Residue Ser13 participates in CTP binding. Residue Ser13 participates in UTP binding. ATP contacts are provided by residues 14-19 (SLGKGI) and Asp71. Residues Asp71 and Glu144 each contribute to the Mg(2+) site. CTP is bound by residues 151–153 (DIE), 191–196 (KTKPTQ), and Lys227. Residues 191–196 (KTKPTQ) and Lys227 each bind UTP. One can recognise a Glutamine amidotransferase type-1 domain in the interval 295–547 (TIGMVGKYVD…VEAALANKQA (253 aa)). Gly356 is a binding site for L-glutamine. Cys383 (nucleophile; for glutamine hydrolysis) is an active-site residue. L-glutamine is bound by residues 384–387 (LGMQ), Glu407, and Arg473. Active-site residues include His520 and Glu522.

The protein belongs to the CTP synthase family. As to quaternary structure, homotetramer.

The enzyme catalyses UTP + L-glutamine + ATP + H2O = CTP + L-glutamate + ADP + phosphate + 2 H(+). It catalyses the reaction L-glutamine + H2O = L-glutamate + NH4(+). The catalysed reaction is UTP + NH4(+) + ATP = CTP + ADP + phosphate + 2 H(+). Its pathway is pyrimidine metabolism; CTP biosynthesis via de novo pathway; CTP from UDP: step 2/2. Its activity is regulated as follows. Allosterically activated by GTP, when glutamine is the substrate; GTP has no effect on the reaction when ammonia is the substrate. The allosteric effector GTP functions by stabilizing the protein conformation that binds the tetrahedral intermediate(s) formed during glutamine hydrolysis. Inhibited by the product CTP, via allosteric rather than competitive inhibition. Catalyzes the ATP-dependent amination of UTP to CTP with either L-glutamine or ammonia as the source of nitrogen. Regulates intracellular CTP levels through interactions with the four ribonucleotide triphosphates. This is CTP synthase from Burkholderia lata (strain ATCC 17760 / DSM 23089 / LMG 22485 / NCIMB 9086 / R18194 / 383).